Here is a 108-residue protein sequence, read N- to C-terminus: Large ribosomal subunit protein uL23 (108 aa).

This sequence belongs to the universal ribosomal protein uL23 family. Part of the 50S ribosomal subunit. Contacts protein L29, and trigger factor when it is bound to the ribosome.

Its function is as follows. One of the early assembly proteins it binds 23S rRNA. One of the proteins that surrounds the polypeptide exit tunnel on the outside of the ribosome. Forms the main docking site for trigger factor binding to the ribosome. This Leptothrix cholodnii (strain ATCC 51168 / LMG 8142 / SP-6) (Leptothrix discophora (strain SP-6)) protein is Large ribosomal subunit protein uL23.